Here is a 404-residue protein sequence, read N- to C-terminus: Cysteine desulfurase IscS (404 aa).

Pyridoxal 5'-phosphate is bound by residues 75–76 (AT), asparagine 155, glutamine 183, and 203–205 (SAH). Residue lysine 206 is modified to N6-(pyridoxal phosphate)lysine. Threonine 243 contacts pyridoxal 5'-phosphate. Cysteine 328 acts as the Cysteine persulfide intermediate in catalysis. Cysteine 328 is a binding site for [2Fe-2S] cluster.

Belongs to the class-V pyridoxal-phosphate-dependent aminotransferase family. NifS/IscS subfamily. Homodimer. Forms a heterotetramer with IscU, interacts with other sulfur acceptors. Requires pyridoxal 5'-phosphate as cofactor.

The protein resides in the cytoplasm. The catalysed reaction is (sulfur carrier)-H + L-cysteine = (sulfur carrier)-SH + L-alanine. Its pathway is cofactor biosynthesis; iron-sulfur cluster biosynthesis. Its function is as follows. Master enzyme that delivers sulfur to a number of partners involved in Fe-S cluster assembly, tRNA modification or cofactor biosynthesis. Catalyzes the removal of elemental sulfur atoms from cysteine to produce alanine. Functions as a sulfur delivery protein for Fe-S cluster synthesis onto IscU, an Fe-S scaffold assembly protein, as well as other S acceptor proteins. The protein is Cysteine desulfurase IscS of Photorhabdus laumondii subsp. laumondii (strain DSM 15139 / CIP 105565 / TT01) (Photorhabdus luminescens subsp. laumondii).